We begin with the raw amino-acid sequence, 518 residues long: 3-octaprenyl-4-hydroxybenzoate carboxy-lyase (518 aa).

Asn177 contributes to the Mn(2+) binding site. Residues 180 to 182, 194 to 196, and 199 to 200 each bind prenylated FMN; these read IYR, RWL, and RG. Residue Glu243 coordinates Mn(2+). The Proton donor role is filled by Asp318.

It belongs to the UbiD family. As to quaternary structure, homohexamer. Requires prenylated FMN as cofactor. The cofactor is Mn(2+).

The protein localises to the cell membrane. It carries out the reaction a 4-hydroxy-3-(all-trans-polyprenyl)benzoate + H(+) = a 2-(all-trans-polyprenyl)phenol + CO2. The protein operates within cofactor biosynthesis; ubiquinone biosynthesis. Its function is as follows. Catalyzes the decarboxylation of 3-octaprenyl-4-hydroxy benzoate to 2-octaprenylphenol, an intermediate step in ubiquinone biosynthesis. This chain is 3-octaprenyl-4-hydroxybenzoate carboxy-lyase, found in Burkholderia multivorans (strain ATCC 17616 / 249).